The chain runs to 60 residues: Short neurotoxin 1 (60 aa).

Cystine bridges form between Cys-3–Cys-22, Cys-17–Cys-39, Cys-41–Cys-52, and Cys-53–Cys-58.

This sequence belongs to the three-finger toxin family. Short-chain subfamily. Type I alpha-neurotoxin sub-subfamily. As to expression, expressed by the venom gland.

The protein resides in the secreted. In terms of biological role, binds to muscle nicotinic acetylcholine receptor (nAChR) and inhibit acetylcholine from binding to the receptor, thereby impairing neuromuscular transmission. The recombinant protein also barely blocks voltage-gated potassium channel Kv1.3/KCNA3 (2.71% inhibition at 60 nM of toxin). The protein is Short neurotoxin 1 of Hydrophis lapemoides (Persian gulf sea snake).